Consider the following 672-residue polypeptide: Spermatid perinuclear RNA-binding protein (672 aa).

The DZF domain maps to 5 to 362; the sequence is RSFANDDRHV…ALKRPFEDGV (358 aa). Residues 348–370 form a disordered region; that stretch reads GTGSSALKRPFEDGVGDDKDPNK. Residues 356–370 are compositionally biased toward basic and acidic residues; that stretch reads RPFEDGVGDDKDPNK. A DRBM 1 domain is found at 386–452; the sequence is DLMNALMRLN…AVKVLQAMGY (67 aa). Positions 463-494 are disordered; sequence VSSDEKSDNEGKNETVSSISSNNTGNSTADTS. Residues 465–475 show a composition bias toward basic and acidic residues; that stretch reads SDEKSDNEGKN. A compositionally biased stretch (low complexity) spans 477–490; that stretch reads TVSSISSNNTGNST. The DRBM 2 domain occupies 509–575; the sequence is SGKNPVMELN…ALAALEKLFS (67 aa).

It localises to the cytoplasm. Its function is as follows. May be involved in normal spermatogenesis and sperm function. Binds to double-stranded DNA and RNA. This is Spermatid perinuclear RNA-binding protein (STRBP) from Gallus gallus (Chicken).